A 193-amino-acid chain; its full sequence is Oocyte-secreted protein 3 (193 aa).

An N-terminal signal peptide occupies residues 1–22; the sequence is MKDFVRLQSSFLLCTILTLSEQ. Asn64, Asn130, Asn148, Asn151, Asn165, and Asn178 each carry an N-linked (GlcNAc...) asparagine glycan.

It belongs to the PLAC1 family.

Its subcellular location is the secreted. The protein is Oocyte-secreted protein 3 of Homo sapiens (Human).